Here is a 180-residue protein sequence, read N- to C-terminus: Acireductone dioxygenase (180 aa).

Residues His88, His90, Glu94, and His133 each coordinate Fe(2+). Ni(2+) is bound by residues His88, His90, Glu94, and His133.

This sequence belongs to the acireductone dioxygenase (ARD) family. Monomer. Interacts with MMP14. Fe(2+) serves as cofactor. Requires Ni(2+) as cofactor.

It is found in the cytoplasm. Its subcellular location is the nucleus. The protein localises to the cell membrane. The enzyme catalyses 1,2-dihydroxy-5-(methylsulfanyl)pent-1-en-3-one + O2 = 4-methylsulfanyl-2-oxobutanoate + formate + 2 H(+). It carries out the reaction 1,2-dihydroxy-5-(methylsulfanyl)pent-1-en-3-one + O2 = 3-(methylsulfanyl)propanoate + CO + formate + 2 H(+). Its pathway is amino-acid biosynthesis; L-methionine biosynthesis via salvage pathway; L-methionine from S-methyl-5-thio-alpha-D-ribose 1-phosphate: step 5/6. In terms of biological role, catalyzes 2 different reactions between oxygen and the acireductone 1,2-dihydroxy-3-keto-5-methylthiopentene (DHK-MTPene) depending upon the metal bound in the active site. Fe-containing acireductone dioxygenase (Fe-ARD) produces formate and 2-keto-4-methylthiobutyrate (KMTB), the alpha-ketoacid precursor of methionine in the methionine recycle pathway. Ni-containing acireductone dioxygenase (Ni-ARD) produces methylthiopropionate, carbon monoxide and formate, and does not lie on the methionine recycle pathway. In Gallus gallus (Chicken), this protein is Acireductone dioxygenase.